We begin with the raw amino-acid sequence, 95 residues long: Small ribosomal subunit protein bS18 (95 aa).

The protein belongs to the bacterial ribosomal protein bS18 family. In terms of assembly, part of the 30S ribosomal subunit. Forms a tight heterodimer with protein bS6.

Binds as a heterodimer with protein bS6 to the central domain of the 16S rRNA, where it helps stabilize the platform of the 30S subunit. The protein is Small ribosomal subunit protein bS18 of Acidiphilium cryptum (strain JF-5).